The chain runs to 439 residues: Ribosomal protein uS12 methylthiotransferase RimO (439 aa).

An MTTase N-terminal domain is found at 7–122; the sequence is QTIAVIALGC…LPDLVFGKNF (116 aa). [4Fe-4S] cluster contacts are provided by Cys16, Cys52, Cys85, Cys155, Cys159, and Cys162. Residues 141–369 form the Radical SAM core domain; it reads SSTIPSAYLK…NAQYNIFQAK (229 aa).

This sequence belongs to the methylthiotransferase family. RimO subfamily. [4Fe-4S] cluster is required as a cofactor.

It localises to the cytoplasm. It catalyses the reaction L-aspartate(89)-[ribosomal protein uS12]-hydrogen + (sulfur carrier)-SH + AH2 + 2 S-adenosyl-L-methionine = 3-methylsulfanyl-L-aspartate(89)-[ribosomal protein uS12]-hydrogen + (sulfur carrier)-H + 5'-deoxyadenosine + L-methionine + A + S-adenosyl-L-homocysteine + 2 H(+). In terms of biological role, catalyzes the methylthiolation of an aspartic acid residue of ribosomal protein uS12. The protein is Ribosomal protein uS12 methylthiotransferase RimO of Endomicrobium trichonymphae.